The primary structure comprises 192 residues: Adenylate kinase (192 aa).

Position 10-18 (10-18) interacts with ATP; sequence GVPGVGSTT.

It belongs to the archaeal adenylate kinase family. In terms of assembly, monomer.

The protein localises to the cytoplasm. The catalysed reaction is AMP + ATP = 2 ADP. This is Adenylate kinase (adkA) from Methanococcus voltae.